The sequence spans 454 residues: N-myc 2 proto-oncogene protein (454 aa).

Disordered regions lie at residues 132–166 (SEKM…HSGT), 230–269 (VAAP…DEEE), and 325–374 (PSPY…VRRR). Residues 151 to 161 (PGAGAASPAGR) show a composition bias toward low complexity. Residues 256–269 (ALSDEVDEEEDEEE) show a composition bias toward acidic residues. Residues 363 to 374 (RKSDSEDSVRRR) are compositionally biased toward basic and acidic residues. The bHLH domain maps to 371-423 (VRRRNHNILERQRRNDLRSSFTTLRDHVPELVKNEKAAKVVILKKACEYVHYL). Residues 423-444 (LQAKEHQLLMEKEKLQARQQQL) form a leucine-zipper region.

Efficient DNA binding requires dimerization with another bHLH protein.

It localises to the nucleus. This is N-myc 2 proto-oncogene protein (N-MYC2) from Marmota monax (Woodchuck).